A 120-amino-acid chain; its full sequence is Large ribosomal subunit protein uL18 (120 aa).

It belongs to the universal ribosomal protein uL18 family. Part of the 50S ribosomal subunit; part of the 5S rRNA/L5/L18/L25 subcomplex. Contacts the 5S and 23S rRNAs.

Functionally, this is one of the proteins that bind and probably mediate the attachment of the 5S RNA into the large ribosomal subunit, where it forms part of the central protuberance. The sequence is that of Large ribosomal subunit protein uL18 from Sinorhizobium medicae (strain WSM419) (Ensifer medicae).